The chain runs to 613 residues: MKRSTTQILTRLRELMLRAQVGDSCGISAYIVPSDDAHQSEYQCQHDERRSFVSGFDGSAGTAVITTETALLWTDGRYYQQAEKQLDSNWVLMRDGLSATPSIGAWLAKNLPKGSFVGVDPRLLSFRVWKPIETELSSAECQLVPIEGNLIDEVWGEDQPPQTSNKIITLKLEHSGVTIAKKWDVVRQQLKEKNADALVVSALDEIAWFLNLRGSDIDFNPVFFSYLIVTNDELLLFVDSGKLPTDFVQHQKENNVQISVLPYASIGIEISKIVSTRESKIWIAPTSSYYLTALIPKSRRIQEVTPICVLKAIKNDVEIAGFINSHIRDGVALCQYFAWLEDQVNKGAEVDEMSGADKLESFRSTKDKYMGLSFTTISASGPNGSVIHYHPKKETNRKINDKEIYLCDSGAQYLDGTTDVTRTLHFGEPTEFQKEAYTRVLKGQLSFGSTVFPAKVKGQVLDTLARKALWDVGLDYGHGTGHGVGHFLNVHEGPMGVGIRLMPDDPGLQANMFISNEPGFYQDGEFGIRVEDIVQIVPGQVAHNFSNRGALTFKTITMCPKQTKMIKKELLSDAEVKLLNSYHQQVWDTLSPILSREGDEFTLSWLKKEVQPI.

Substrate is bound by residues R77 and H388. Residues D408, D419, and H482 each contribute to the Mn(2+) site. H482, H491, and E517 together coordinate substrate. Residues E517 and E531 each contribute to the Mn(2+) site.

This sequence belongs to the peptidase M24B family. It depends on Mn(2+) as a cofactor. As to expression, detected in gut, brain, testes and ovary.

It localises to the cytoplasm. It carries out the reaction Release of any N-terminal amino acid, including proline, that is linked to proline, even from a dipeptide or tripeptide.. Its activity is regulated as follows. Inhibited by the chelating agent EDTA. Divalent metal ions have substrate- and concentration-dependent effects on activity. Activity towards bradykinin is inhibited with increasing Mn(2+) concentration. Activity towards substance P is stimulated by low Mn(2+) concentrations (in the range 10 uM-1 mM) but inhibited by Mn(2+) concentrations in excess of 1 mM. Ca(2+), Mg(2+) and Co(2+) stimulate activity towards substance P at concentrations of 10-100 uM but are inhibitory at concentrations of 1 mM. Zn(2+), Ni(2+) and Cu(2+) strongly inhibit activity towards substance P at concentrations of 1 mM. Functionally, catalyzes the removal of a penultimate prolyl residue from the N-termini of peptides, such as Arg-Pro-Pro. The chain is Xaa-Pro aminopeptidase ApepP from Drosophila melanogaster (Fruit fly).